The following is a 247-amino-acid chain: ATP synthase subunit a, chloroplastic (247 aa).

Transmembrane regions (helical) follow at residues 38-58 (QVLI…IIAV), 95-115 (VPFI…GALL), 134-154 (INTT…AGLT), 199-219 (LVVV…VMFL), and 220-240 (GLFT…AYIG).

The protein belongs to the ATPase A chain family. F-type ATPases have 2 components, CF(1) - the catalytic core - and CF(0) - the membrane proton channel. CF(1) has five subunits: alpha(3), beta(3), gamma(1), delta(1), epsilon(1). CF(0) has four main subunits: a, b, b' and c.

The protein resides in the plastid. Its subcellular location is the chloroplast thylakoid membrane. Key component of the proton channel; it plays a direct role in the translocation of protons across the membrane. This is ATP synthase subunit a, chloroplastic from Morus indica (Mulberry).